A 1051-amino-acid chain; its full sequence is Serine/threonine-protein kinase ULK1 (1051 aa).

Residues 16–278 form the Protein kinase domain; sequence FSRKDLIGHG…FDEFFHHPFL (263 aa). ATP is bound by residues 22–30 and K46; that span reads IGHGAFAVV. D138 acts as the Proton acceptor in catalysis. An N6-acetyllysine modification is found at K162. Disordered stretches follow at residues 283–323, 335–358, and 394–554; these read PIKK…EMPQ, AGFL…DDFV, and GLES…CRLH. The interval 287–416 is interaction with GABARAP and GABARAPL2; it reads SPPVPVPSYP…TCSSSPSPSG (130 aa). 3 stretches are compositionally biased toward low complexity: residues 295–318, 340–349, and 400–423; these read YPSS…PPSL, GSRDSGGSSK, and RTPS…PFSS. S317 is subject to Phosphoserine; by AMPK. Phosphoserine occurs at positions 403 and 450. A compositionally biased stretch (polar residues) spans 437 to 459; it reads QVHNYQRIEQNLQSPTQQQTARS. T456 is modified (phosphothreonine). A phosphoserine mark is found at S467, S477, S479, and S521. S555 bears the Phosphoserine; by AMPK mark. T574 is modified (phosphothreonine). The residue at position 606 (K606) is an N6-acetyllysine. At T635 the chain carries Phosphothreonine. The residue at position 637 (S637) is a Phosphoserine; by AMPK. S638 is modified (phosphoserine). Disordered regions lie at residues 661-686 and 727-787; these read PDLS…DTRG and APSA…TGSS. The segment covering 731-745 has biased composition (gly residues); it reads GFGGTLHPGARGGGA. Phosphoserine; by MTOR is present on S757. S774 carries the post-translational modification Phosphoserine. Over residues 774 to 787 the composition is skewed to low complexity; that stretch reads SVGSSSSLGSTGSS. Phosphoserine; by AMPK is present on S777. Residues 829–1051 are C-terminal domain; mediates interaction with SESN2; it reads PDLPEETLME…LSALLSGVYA (223 aa).

It belongs to the protein kinase superfamily. Ser/Thr protein kinase family. APG1/unc-51/ULK1 subfamily. In terms of assembly, interacts with GABARAP and GABARAPL2. Interacts (via C-terminus) with ATG13. Part of a complex consisting of ATG13, ATG101, ULK1 and RB1CC1. Associates with the mammalian target of rapamycin complex 1 (mTORC1) through an interaction with RPTOR; the association depends on nutrient conditions and is reduced during starvation. Interacts with FEZ1; SCOC interferes with FEZ1-binding. Interacts with TBC1D14. Interacts (phosphorylated form) with TRIM5. When phosphorylated at Ser-317, interacts with MEFV and BECN1 simultaneously. Interacts with TRIM21 and IRF3, in the presence of TRIM21. Interacts with SESN2. Interacts with SQSTM1. Interacts with C9orf72. Interacts with WDR45. Interacts with ATG13; this interaction is increased in the absence of TMEM39A. Interacts with WIPI2. Interacts with ATP2A2. Interacts with AMBRA1. Interacts with Irgm1; promoting the coassembly of ULK1 and BECN1. Post-translationally, autophosphorylated. Phosphorylated under nutrient-rich conditions; dephosphorylated during starvation or following treatment with rapamycin. In response to nutrient limitation, phosphorylated and activated by AMPK, leading to activate autophagy. Under nutrient sufficiency, phosphorylated by MTOR/mTOR, disrupting the interaction with AMPK and preventing activation of ULK1. Ubiquitinated via 'Lys-63'-linkage by a complex composed of AMBRA1 and TRAF6 following autophagy induction, promoting ULK1 stability and kinase activity. Deubiquitinated by USP20; leading to ULK1 stability and autophagy initiation. In terms of processing, acetylated by KAT5/TIP60 under autophagy induction, promoting protein kinase activity.

Its subcellular location is the cytoplasm. It localises to the cytosol. The protein resides in the preautophagosomal structure. It carries out the reaction L-seryl-[protein] + ATP = O-phospho-L-seryl-[protein] + ADP + H(+). It catalyses the reaction L-threonyl-[protein] + ATP = O-phospho-L-threonyl-[protein] + ADP + H(+). Acetylation by KAT5/TIP60 stimulates the protein kinase activity. The protein kinase activity is activated by unanchored 'Lys-63'-linked polyubiquitin chains: unanchored 'Lys-63'-linked polyubiquitin chains are catalyzed by TRIM32 in an AMBRA1-dependent manner. In terms of biological role, serine/threonine-protein kinase involved in autophagy in response to starvation. Acts upstream of phosphatidylinositol 3-kinase PIK3C3 to regulate the formation of autophagophores, the precursors of autophagosomes. Part of regulatory feedback loops in autophagy: acts both as a downstream effector and negative regulator of mammalian target of rapamycin complex 1 (mTORC1) via interaction with RPTOR. Activated via phosphorylation by AMPK and also acts as a regulator of AMPK by mediating phosphorylation of AMPK subunits PRKAA1, PRKAB2 and PRKAG1, leading to negatively regulate AMPK activity. May phosphorylate ATG13/KIAA0652 and RPTOR; however such data need additional evidences. Plays a role early in neuronal differentiation and is required for granule cell axon formation. Also phosphorylates SESN2 and SQSTM1 to regulate autophagy. Phosphorylates FLCN, promoting autophagy. Phosphorylates AMBRA1 in response to autophagy induction, releasing AMBRA1 from the cytoskeletal docking site to induce autophagosome nucleation. Phosphorylates ATG4B, leading to inhibit autophagy by decreasing both proteolytic activation and delipidation activities of ATG4B. This Mus musculus (Mouse) protein is Serine/threonine-protein kinase ULK1 (Ulk1).